Here is a 709-residue protein sequence, read N- to C-terminus: Elongation factor G (709 aa).

One can recognise a tr-type G domain in the interval 9–295 (AKVRNIGIMA…AVVRYLPTPL (287 aa)). Residues 18 to 25 (AHIDAGKT), 86 to 90 (DTPGH), and 140 to 143 (NKLD) each bind GTP.

The protein belongs to the TRAFAC class translation factor GTPase superfamily. Classic translation factor GTPase family. EF-G/EF-2 subfamily.

The protein resides in the cytoplasm. Its function is as follows. Catalyzes the GTP-dependent ribosomal translocation step during translation elongation. During this step, the ribosome changes from the pre-translocational (PRE) to the post-translocational (POST) state as the newly formed A-site-bound peptidyl-tRNA and P-site-bound deacylated tRNA move to the P and E sites, respectively. Catalyzes the coordinated movement of the two tRNA molecules, the mRNA and conformational changes in the ribosome. In Streptomyces avermitilis (strain ATCC 31267 / DSM 46492 / JCM 5070 / NBRC 14893 / NCIMB 12804 / NRRL 8165 / MA-4680), this protein is Elongation factor G.